The following is a 729-amino-acid chain: MLYQSETLQLHWLENGIAELVFDAPGSVNKLDTKTVANLGEALNVLEKQSELKGLLLRSAKTALIVGADITEFLSLFNAPPEKLHQWLVFANTIFNRLEDLPVPTISAINGYALGGGCECILATDFRIASPEARIGLPETKLGIMPGFGGSVRLPRLLGADSALEIIATGKDVTANDALKIGLVDAVVDPEKLVGSALTMLKQAIDGKLDWQAARRPKLEPLKLNPTEAAMCFTIAKGRVMQVAGKHYPAPLTAVKTIEAAAKFGRTEALNLETNSFVPLAGSNEARALVGIFLNDQYVKAQAKKLSKGVAAPKLAAVLGAGIMGGGIAYQSALKSVPVIMKDINENSLDLGMNEAAKLLNKQLERGKVDGLKMASILATIRPTLDYAGIERAQVIVEAVVENPKVKAAVLAEVEALIGEDTVLASNTSTIPIDQLAKSLKRPENFCGMHFFNPVHRMPLVEIIRGAKTSDKTLAAVVAYATQMGKTPIVVNDCPGFFVNRVLFPYLAGFGMLVRDGGDFHQIDKVMEKQFGWPMGPAYLLDVVGIDTAHHAQAVMAAGFPERMNKDYRDAVDVMFDNQRFGQKNGQGFYRYTQDAKGKPRKENDEQVDKLLAEISQPLQEFSDEDIIARTMIPMINEVVRCLEEGIIASAAEGDMALVYGLGFPPFHGGVFRYLDTLGSANYVEMAQRYAHLGALYHVPAGLRAKAEHNESYYPVAAALLDVSTNQPA.

Residues 1-189 (MLYQSETLQL…KIGLVDAVVD (189 aa)) are enoyl-CoA hydratase/isomerase. A substrate-binding site is contributed by D296. The segment at 311–729 (AAPKLAAVLG…LLDVSTNQPA (419 aa)) is 3-hydroxyacyl-CoA dehydrogenase. NAD(+) is bound by residues M324, D343, 400–402 (VVE), K407, and S429. The active-site For 3-hydroxyacyl-CoA dehydrogenase activity is the H450. Residue N453 coordinates NAD(+). Substrate-binding residues include N500 and Y660.

The protein in the N-terminal section; belongs to the enoyl-CoA hydratase/isomerase family. It in the C-terminal section; belongs to the 3-hydroxyacyl-CoA dehydrogenase family. Heterotetramer of two alpha chains (FadB) and two beta chains (FadA).

The enzyme catalyses a (3S)-3-hydroxyacyl-CoA + NAD(+) = a 3-oxoacyl-CoA + NADH + H(+). It carries out the reaction a (3S)-3-hydroxyacyl-CoA = a (2E)-enoyl-CoA + H2O. The catalysed reaction is a 4-saturated-(3S)-3-hydroxyacyl-CoA = a (3E)-enoyl-CoA + H2O. It catalyses the reaction (3S)-3-hydroxybutanoyl-CoA = (3R)-3-hydroxybutanoyl-CoA. The enzyme catalyses a (3Z)-enoyl-CoA = a 4-saturated (2E)-enoyl-CoA. It carries out the reaction a (3E)-enoyl-CoA = a 4-saturated (2E)-enoyl-CoA. It participates in lipid metabolism; fatty acid beta-oxidation. Involved in the aerobic and anaerobic degradation of long-chain fatty acids via beta-oxidation cycle. Catalyzes the formation of 3-oxoacyl-CoA from enoyl-CoA via L-3-hydroxyacyl-CoA. It can also use D-3-hydroxyacyl-CoA and cis-3-enoyl-CoA as substrate. The polypeptide is Fatty acid oxidation complex subunit alpha (Yersinia pestis bv. Antiqua (strain Antiqua)).